A 152-amino-acid polypeptide reads, in one-letter code: MSQLEQKLTEMLTAPVEALGFEMVGIEFVRAGKHSTMRVYIDHPDGISVDHCAEVSHQVSAVLDVEDPINTEYNLEVSSPGMERPLFKLQHYIESVGEVVTLRLKMPMGDRRNFKGKLLSEADGMLTIEVDNQEFVLAFANIEKGNVVPTFD.

Belongs to the RimP family.

Its subcellular location is the cytoplasm. Its function is as follows. Required for maturation of 30S ribosomal subunits. In Pseudoalteromonas atlantica (strain T6c / ATCC BAA-1087), this protein is Ribosome maturation factor RimP.